The chain runs to 271 residues: Gasdermin bGSDM (271 aa).

C7 carries S-palmitoyl cysteine lipidation. Transmembrane regions (beta stranded) follow at residues 74–90 (IAGTQSADLDVDLGLSV), 102–120 (TLGVDAAFARAATVQFEFS), 168–185 (RINVAAKDSNKQSLGLNL), and 194–210 (ANVKIAAAAASGSTVSF).

Belongs to the bacterial gasdermin family. As to quaternary structure, monomer. Forms large, homooligomeric ring-shaped pores when inserted in membranes. Post-translationally, palmitoylation helps stabilize the inactive state; may self palmitoylate. Palmitoylation plays a significant role in pore formation.

Its subcellular location is the cytoplasm. It localises to the cell inner membrane. Its activity is regulated as follows. The full-length protein before cleavage is inactive: intramolecular interactions between the N-terminal domain and the C-terminal region as well as the lipid modification, mediate autoinhibition. The pyroptosis-like-inducing activity is carried by the released N-terminal domain (Gasdermin bGSDM, N-terminus). In terms of biological role, involved in defense against bacteriophages. When this probable 4 gene operon (bGSDM-FE772_23060-FE772_23065-FE772_23070) is inserted into E.coli it provides nearly 100-fold protection against phages T5 and T6 and about 8-fold against phage T4. The operon without bGSDM no longer protects against phage. Cleavage of this precursor by its dedicated protease(s) releases the active moiety (gasdermin bGSDM, N-terminus) which inserts into membranes, forming pores and triggering cell death. Pore-forming protein that causes membrane permeabilization via a pyroptosis-like activity. Makes ring-like pores when released. The chain is Gasdermin bGSDM from Lysobacter enzymogenes.